Reading from the N-terminus, the 357-residue chain is GTPase Obg (357 aa).

An Obg domain is found at 1–159 (MKFVDEAFID…RNLKLELKVL (159 aa)). Residues 160 to 334 (ADVGLLGMPN…LIQAIYQHVR (175 aa)) enclose the OBG-type G domain. GTP is bound by residues 166–173 (GMPNAGKS), 191–195 (FTTLH), 213–216 (DIPG), 284–287 (NKLD), and 315–317 (SAL). Mg(2+) is bound by residues Ser173 and Thr193.

Belongs to the TRAFAC class OBG-HflX-like GTPase superfamily. OBG GTPase family. Monomer. Requires Mg(2+) as cofactor.

The protein resides in the cytoplasm. An essential GTPase which binds GTP, GDP and possibly (p)ppGpp with moderate affinity, with high nucleotide exchange rates and a fairly low GTP hydrolysis rate. Plays a role in control of the cell cycle, stress response, ribosome biogenesis and in those bacteria that undergo differentiation, in morphogenesis control. This chain is GTPase Obg, found in Paracidovorax citrulli (strain AAC00-1) (Acidovorax citrulli).